A 248-amino-acid chain; its full sequence is Cytochrome c oxidase subunit 2 (248 aa).

At 1-39 (MMKELLMNNMLNDVPTPWAMYFQDSATPNMEGIMELHNN) the chain is on the mitochondrial intermembrane side. A helical transmembrane segment spans residues 40–56 (VVFYLIIMLCFVTYMLY). Residues 57–87 (NISTVYNKSAVAYKYMNHGQFIEMVWTTFPA) are Mitochondrial matrix-facing. Residues 88 to 104 (VMLLIMAFPSFMLLYIC) form a helical membrane-spanning segment. Topologically, residues 105–248 (DEVMAPAMTI…ADFLTWIDEQ (144 aa)) are mitochondrial intermembrane. Cu cation contacts are provided by H183, C218, E220, C222, H226, and M229. E220 contributes to the Mg(2+) binding site.

It belongs to the cytochrome c oxidase subunit 2 family. As to quaternary structure, component of the cytochrome c oxidase (complex IV, CIV), a multisubunit enzyme composed of a catalytic core of 3 subunits and several supernumerary subunits. The complex exists as a monomer or a dimer and forms supercomplexes (SCs) in the inner mitochondrial membrane with ubiquinol-cytochrome c oxidoreductase (cytochrome b-c1 complex, complex III, CIII). Cu cation serves as cofactor.

It localises to the mitochondrion inner membrane. The enzyme catalyses 4 Fe(II)-[cytochrome c] + O2 + 8 H(+)(in) = 4 Fe(III)-[cytochrome c] + 2 H2O + 4 H(+)(out). Functionally, component of the cytochrome c oxidase, the last enzyme in the mitochondrial electron transport chain which drives oxidative phosphorylation. The respiratory chain contains 3 multisubunit complexes succinate dehydrogenase (complex II, CII), ubiquinol-cytochrome c oxidoreductase (cytochrome b-c1 complex, complex III, CIII) and cytochrome c oxidase (complex IV, CIV), that cooperate to transfer electrons derived from NADH and succinate to molecular oxygen, creating an electrochemical gradient over the inner membrane that drives transmembrane transport and the ATP synthase. Cytochrome c oxidase is the component of the respiratory chain that catalyzes the reduction of oxygen to water. Electrons originating from reduced cytochrome c in the intermembrane space (IMS) are transferred via the dinuclear copper A center (CU(A)) of subunit 2 and heme A of subunit 1 to the active site in subunit 1, a binuclear center (BNC) formed by heme A3 and copper B (CU(B)). The BNC reduces molecular oxygen to 2 water molecules using 4 electrons from cytochrome c in the IMS and 4 protons from the mitochondrial matrix. The chain is Cytochrome c oxidase subunit 2 (COX2) from Brettanomyces naardenensis (Yeast).